Consider the following 632-residue polypeptide: tRNA endonuclease VMS1 (632 aa).

The C2H2-type zinc-finger motif lies at 72–96 (MRCSVCQMSFDSRNEQKAHYQTDYH). The tract at residues 123 to 155 (HGIKSEDENSGGEQTSSDHEESEEASDRDPDLQ) is disordered. A VLRF1 domain is found at 232–392 (PMAISALFMV…KKAWCELSYL (161 aa)). Glutamine 295 is an active-site residue. ANK repeat units follow at residues 470–500 (LTPT…DPTI) and 504–530 (LGRT…NLGE). Coiled coils occupy residues 544-582 (LSRE…QRFA) and 608-632 (TDEQ…KKKY). A compositionally biased stretch (basic and acidic residues) spans 578–589 (KQRFAKDAERGP). The interval 578 to 632 (KQRFAKDAERGPGKKLTNIPSIQQQNLNSLTDEQRRRLMREQRARAAEERMKKKY) is disordered. A compositionally biased stretch (polar residues) spans 595–608 (NIPSIQQQNLNSLT). Positions 609-632 (DEQRRRLMREQRARAAEERMKKKY) are enriched in basic and acidic residues.

Belongs to the ANKZF1/VMS1 family. As to quaternary structure, associates with 60S ribosomal subunit. Interacts with CDC48. Interacts with NPL4.

The protein resides in the cytoplasm. It localises to the mitochondrion. It is found in the endoplasmic reticulum membrane. Endonuclease that cleaves polypeptidyl-tRNAs downstream of the ribosome-associated quality control (RQC) pathway to release incompletely synthesized polypeptides for degradation. The RQC pathway disassembles aberrantly stalled translation complexes to recycle or degrade the constituent parts. VMS1 acts downstream disassembly of stalled ribosomes and specifically cleaves off the terminal 3'-CCA nucleotides universal to all tRNAs from polypeptidyl-tRNAs, releasing (1) ubiquitinated polypeptides from 60S ribosomal subunit for degradation by the ERAD pathway and (2) cleaved tRNAs for recycling. Component of an evolutionarily conserved system for ubiquitin-mediated mitochondria-associated protein degradation (MAD), which is necessary to maintain mitochondrial, cellular, and organismal viability. The sequence is that of tRNA endonuclease VMS1 from Saccharomyces cerevisiae (strain ATCC 204508 / S288c) (Baker's yeast).